The sequence spans 148 residues: uncharacterized protein (148 aa).

The 141-residue stretch at 8 to 148 (QVMQEPELKI…DGFLTLILRN (141 aa)) folds into the N-acetyltransferase domain.

It belongs to the acetyltransferase family.

This is an uncharacterized protein from Bacillus subtilis (strain 168).